Here is a 285-residue protein sequence, read N- to C-terminus: MKYIGAHVSAAGGLANAAIRAAEIDATAFALFTKNQRQWRAAPLTTQTIDEFKAACEKYHYTSAQILPHDSYLINLGHPVTEALEKSRDAFIDEMQRCEQLGLSLLNFHPGSHLMQISEEDCLARIAESINIALDKTHGVTAVIENTAGQGSNLGFKFEHLAAIIDGVEDKSRVGVCIDTCHAFAAGYDLRTSAECEKTFADFARIVGFKYLRGMHLNDAKSTFGSRVDRHHSLGEGNIGHDAFRWIMQDDRFDGIPLILETINPDIWAEEIAWLKAQQTEKAVA.

Positions 69, 109, 145, 179, 182, 216, 229, 231, and 261 each coordinate Zn(2+).

Belongs to the AP endonuclease 2 family. The cofactor is Zn(2+).

It catalyses the reaction Endonucleolytic cleavage to 5'-phosphooligonucleotide end-products.. Functionally, endonuclease IV plays a role in DNA repair. It cleaves phosphodiester bonds at apurinic or apyrimidinic (AP) sites, generating a 3'-hydroxyl group and a 5'-terminal sugar phosphate. The protein is Probable endonuclease 4 of Escherichia coli (strain SMS-3-5 / SECEC).